The sequence spans 202 residues: ATP-dependent Clp protease proteolytic subunit (202 aa).

Serine 98 acts as the Nucleophile in catalysis. Histidine 123 is an active-site residue.

Belongs to the peptidase S14 family. In terms of assembly, fourteen ClpP subunits assemble into 2 heptameric rings which stack back to back to give a disk-like structure with a central cavity, resembling the structure of eukaryotic proteasomes.

It localises to the cytoplasm. It catalyses the reaction Hydrolysis of proteins to small peptides in the presence of ATP and magnesium. alpha-casein is the usual test substrate. In the absence of ATP, only oligopeptides shorter than five residues are hydrolyzed (such as succinyl-Leu-Tyr-|-NHMec, and Leu-Tyr-Leu-|-Tyr-Trp, in which cleavage of the -Tyr-|-Leu- and -Tyr-|-Trp bonds also occurs).. In terms of biological role, cleaves peptides in various proteins in a process that requires ATP hydrolysis. Has a chymotrypsin-like activity. Plays a major role in the degradation of misfolded proteins. The sequence is that of ATP-dependent Clp protease proteolytic subunit from Solidesulfovibrio magneticus (strain ATCC 700980 / DSM 13731 / RS-1) (Desulfovibrio magneticus).